The primary structure comprises 127 residues: Large ribosomal subunit protein bL17 (127 aa).

It belongs to the bacterial ribosomal protein bL17 family. In terms of assembly, part of the 50S ribosomal subunit. Contacts protein L32.

In Lactobacillus johnsonii (strain CNCM I-12250 / La1 / NCC 533), this protein is Large ribosomal subunit protein bL17.